Here is a 149-residue protein sequence, read N- to C-terminus: Transcriptional repressor NrdR (149 aa).

A zinc finger spans residues 3–34 (CPFCAAEETKVVDSRLAADGYQIRRRRECTSC). The ATP-cone domain maps to 49–139 (PYVIKNNGNR…VYLSFDDIEE (91 aa)).

The protein belongs to the NrdR family. It depends on Zn(2+) as a cofactor.

Functionally, negatively regulates transcription of bacterial ribonucleotide reductase nrd genes and operons by binding to NrdR-boxes. The polypeptide is Transcriptional repressor NrdR (Actinobacillus pleuropneumoniae serotype 5b (strain L20)).